We begin with the raw amino-acid sequence, 201 residues long: Recombination protein RecR (201 aa).

A C4-type zinc finger spans residues 60–75; sequence CQVCGNVDVRDPCTVC. The region spanning 83–178 is the Toprim domain; that stretch reads SVLVVVAEVA…KVTRLAHGVP (96 aa).

Belongs to the RecR family.

In terms of biological role, may play a role in DNA repair. It seems to be involved in an RecBC-independent recombinational process of DNA repair. It may act with RecF and RecO. This is Recombination protein RecR from Azorhizobium caulinodans (strain ATCC 43989 / DSM 5975 / JCM 20966 / LMG 6465 / NBRC 14845 / NCIMB 13405 / ORS 571).